The primary structure comprises 211 residues: Histidine biosynthesis bifunctional protein HisIE (211 aa).

Residues 1–107 (MNKLIDFSKG…FNSEIESRFK (107 aa)) are phosphoribosyl-AMP cyclohydrolase. Residues 108–211 (IQALAQTIHQ…KGERKKVQEW (104 aa)) are phosphoribosyl-ATP pyrophosphohydrolase.

In the N-terminal section; belongs to the PRA-CH family. This sequence in the C-terminal section; belongs to the PRA-PH family.

It is found in the cytoplasm. It carries out the reaction 1-(5-phospho-beta-D-ribosyl)-ATP + H2O = 1-(5-phospho-beta-D-ribosyl)-5'-AMP + diphosphate + H(+). The catalysed reaction is 1-(5-phospho-beta-D-ribosyl)-5'-AMP + H2O = 1-(5-phospho-beta-D-ribosyl)-5-[(5-phospho-beta-D-ribosylamino)methylideneamino]imidazole-4-carboxamide. Its pathway is amino-acid biosynthesis; L-histidine biosynthesis; L-histidine from 5-phospho-alpha-D-ribose 1-diphosphate: step 2/9. It participates in amino-acid biosynthesis; L-histidine biosynthesis; L-histidine from 5-phospho-alpha-D-ribose 1-diphosphate: step 3/9. This is Histidine biosynthesis bifunctional protein HisIE from Staphylococcus epidermidis (strain ATCC 12228 / FDA PCI 1200).